A 151-amino-acid polypeptide reads, in one-letter code: Transcriptional regulator MraZ (151 aa).

SpoVT-AbrB domains follow at residues 5–52 (IHQV…PLSE) and 81–124 (ATDL…SQEE).

Belongs to the MraZ family. In terms of assembly, forms oligomers.

It localises to the cytoplasm. Its subcellular location is the nucleoid. This chain is Transcriptional regulator MraZ, found in Marinomonas sp. (strain MWYL1).